Here is a 221-residue protein sequence, read N- to C-terminus: Peptide methionine sulfoxide reductase MsrA (221 aa).

Residue cysteine 54 is part of the active site.

This sequence belongs to the MsrA Met sulfoxide reductase family.

It carries out the reaction L-methionyl-[protein] + [thioredoxin]-disulfide + H2O = L-methionyl-(S)-S-oxide-[protein] + [thioredoxin]-dithiol. The enzyme catalyses [thioredoxin]-disulfide + L-methionine + H2O = L-methionine (S)-S-oxide + [thioredoxin]-dithiol. Functionally, has an important function as a repair enzyme for proteins that have been inactivated by oxidation. Catalyzes the reversible oxidation-reduction of methionine sulfoxide in proteins to methionine. The protein is Peptide methionine sulfoxide reductase MsrA of Methylobacterium nodulans (strain LMG 21967 / CNCM I-2342 / ORS 2060).